Reading from the N-terminus, the 680-residue chain is Zinc finger protein OBI1 (680 aa).

The region spanning 16–87 (VSFEDVAVDF…AEATEQCLPG (72 aa)) is the KRAB domain. Residues 263-280 (CHKIFPNKTELSNHDAMH) form a C2H2-type 1; degenerate zinc finger. 8 C2H2-type zinc fingers span residues 455-477 (FRCN…QRMH), 483-505 (HECK…QGIH), 511-533 (YECN…ERTH), 539-561 (FECK…QKIH), 567-589 (HKCK…QKTH), 595-617 (YECK…ETTH), 623-645 (YECK…QVIH), and 651-673 (FECK…QKIH).

Polyubiquitinated, leading to its degradation via the ubiquitin-proteasome pathway. As to expression, expressed during osteogenic differentiation where levels increase from the first days of differentiation and remain high during the whole process. Highly expressed in lung.

It localises to the nucleus. Its function is as follows. May modulate osteogenic differentiation, at least in part, through the bone morphogenetic protein (BMP) signaling pathway, increasing RUNX2 activation and leading to osteoblast commitment and maturation. In Mus musculus (Mouse), this protein is Zinc finger protein OBI1 (ObI1).